We begin with the raw amino-acid sequence, 30 residues long: Scolopendra 20528.11 Da toxin (30 aa).

Belongs to the CRISP family. Venom allergen 5-like subfamily. Contains 3 disulfide bonds. Expressed by the venom gland.

The protein resides in the secreted. This Scolopendra angulata (Barbados giant red centipede) protein is Scolopendra 20528.11 Da toxin.